Here is an 842-residue protein sequence, read N- to C-terminus: MKPGGFWLHLTLLGASLPAALGWMDPGTSRGPDVGVGESQAEEPRSFEVTRREGLSSHNELLASCGKKFCSRGSRCVLSRKTGEPECQCLEACRPSYVPVCGSDGRFYENHCKLHRAACLLGKRITVIHSKDCFLKGDTCTMAGYARLKNVLLALQTRLQPLQEGDSRQDPASQKRLLVESLFRDLDADGNGHLSSSELAQHVLKKQDLDEDLLGCSPGDLLRFDDYNSDSSLTLREFYMAFQVVQLSLAPEDRVSVTTVTVGLSTVLTCAVHGDLRPPIIWKRNGLTLNFLDLEDINDFGEDDSLYITKVTTIHMGNYTCHASGHEQLFQTHVLQVNVPPVIRVYPESQAQEPGVAASLRCHAEGIPMPRITWLKNGVDVSTQMSKQLSLLANGSELHISSVRYEDTGAYTCIAKNEVGVDEDISSLFIEDSARKTLANILWREEGLSVGNMFYVFSDDGIIVIHPVDCEIQRHLKPTEKIFMSYEEICPQREKNATQPCQWVSAVNVRNRYIYVAQPALSRVLVVDIQAQKVLQSIGVDPLPAKLSYDKSHDQVWVLSWGDVHKSRPSLQVITEASTGQSQHLIRTPFAGVDDFFIPPTNLIINHIRFGFIFNKSDPAVHKVDLETMMPLKTIGLHHHGCVPQAMAHTHLGGYFFIQCRQDSPASAARQLLVDSVTDSVLGPNGDVTGTPHTSPDGRFIVSAAADSPWLHVQEITVRGEIQTLYDLQINSGISDLAFQRSFTESNQYNIYAALHTEPDLLFLELSTGKVGMLKNLKEPPAGPAQPWGGTHRIMRDSGLFGQYLLTPARESLFLINGRQNTLRCEVSGIKGGTTVVWVGEV.

A signal peptide spans 1 to 22 (MKPGGFWLHLTLLGASLPAALG). Positions 81-135 (KTGEPECQCLEACRPSYVPVCGSDGRFYENHCKLHRAACLLGKRITVIHSKDCFL) constitute a Kazal-like domain. Disulfide bonds link Cys-87-Cys-119, Cys-93-Cys-112, and Cys-101-Cys-133. Residues 174–209 (QKRLLVESLFRDLDADGNGHLSSSELAQHVLKKQDL) enclose the EF-hand domain. Asp-187, Asp-189, Asn-191, His-193, and Glu-198 together coordinate Ca(2+). Ig-like domains are found at residues 251-338 (PEDR…LQVN) and 341-426 (PVIR…EDIS). Intrachain disulfides connect Cys-270–Cys-321 and Cys-362–Cys-413. An N-linked (GlcNAc...) asparagine glycan is attached at Asn-318.

It localises to the secreted. In Homo sapiens (Human), this protein is Follistatin-related protein 4 (FSTL4).